A 339-amino-acid polypeptide reads, in one-letter code: D-alanine--D-alanine ligase (339 aa).

The 208-residue stretch at 126–333 (KQVLASVGMP…YSELVTRLVE (208 aa)) folds into the ATP-grasp domain. An ATP-binding site is contributed by 158–213 (AGELGYPLFVKPANLGSSVGISKVSGPGELERALDLAFSLGRRVILEAMTAHKPRE). Asp286, Glu300, and Asn302 together coordinate Mg(2+).

The protein belongs to the D-alanine--D-alanine ligase family. Mg(2+) serves as cofactor. Requires Mn(2+) as cofactor.

Its subcellular location is the cytoplasm. The catalysed reaction is 2 D-alanine + ATP = D-alanyl-D-alanine + ADP + phosphate + H(+). It participates in cell wall biogenesis; peptidoglycan biosynthesis. In terms of biological role, cell wall formation. The sequence is that of D-alanine--D-alanine ligase from Deinococcus geothermalis (strain DSM 11300 / CIP 105573 / AG-3a).